The primary structure comprises 413 residues: Methylaspartate ammonia-lyase (413 aa).

Gln172 contributes to the (2S,3S)-3-methyl-L-aspartate binding site. Mg(2+) is bound by residues Asp238, Glu273, and Asp307. Gln329 is a (2S,3S)-3-methyl-L-aspartate binding site. Catalysis depends on Lys331, which acts as the Proton acceptor. (2S,3S)-3-methyl-L-aspartate is bound by residues 360–361 and Cys361; that span reads TC.

It belongs to the methylaspartate ammonia-lyase family. In terms of assembly, homodimer. It depends on Mg(2+) as a cofactor.

It catalyses the reaction (2S,3S)-3-methyl-L-aspartate = mesaconate + NH4(+). Its pathway is amino-acid degradation; L-glutamate degradation via mesaconate pathway; acetate and pyruvate from L-glutamate: step 2/4. Its activity is regulated as follows. Inhibited by calcium ions. Its function is as follows. Involved in the methylaspartate cycle. Catalyzes the formation of the alpha,beta-unsaturated bond by the reversible anti elimination of ammonia from L-threo-beta-methylaspartate (L-threo-(2S,3S)-3-methylaspartate) to give mesaconate. It can also use L-erythro-beta-methylaspartate (L-erythro-(2S,3R)-3-methylaspartate), L-aspartate, fumarate and ethylfumarate as substrates. This chain is Methylaspartate ammonia-lyase, found in Clostridium tetanomorphum.